Reading from the N-terminus, the 221-residue chain is Iron-sulfur cluster repair protein YtfE (221 aa).

It belongs to the RIC family. YtfE subfamily. In terms of assembly, homodimer.

The protein localises to the cytoplasm. Di-iron-containing protein involved in the repair of iron-sulfur clusters damaged by oxidative and nitrosative stress conditions. The polypeptide is Iron-sulfur cluster repair protein YtfE (Yersinia pestis bv. Antiqua (strain Antiqua)).